The sequence spans 549 residues: Thermosome subunit alpha (549 aa).

A disordered region spans residues 529–549; sequence EGRQGAECPPNGCMGGMDMRM.

It belongs to the TCP-1 chaperonin family. Forms a Heterooligomeric complex of two stacked eight-membered rings.

Its function is as follows. Molecular chaperone; binds unfolded polypeptides in vitro, and has a weak ATPase activity. In Thermococcus sp. (strain KS-8), this protein is Thermosome subunit alpha (thsA).